The sequence spans 237 residues: CD209 antigen-like protein D (237 aa).

The Cytoplasmic portion of the chain corresponds to 1–54; it reads MSDSMESKTQQVVIPEDEECLMSGTRYSDISSRLQTKFGIKSLAEYTKQSRNPL. A helical; Signal-anchor for type II membrane protein membrane pass occupies residues 55–75; that stretch reads VLQLLSFLFLAGLLLIILILV. Residues 76–237 are Extracellular-facing; it reads SKVPSSEVQN…KVSTSSCTTK (162 aa). C106 and C117 are disulfide-bonded. Residues 112–227 enclose the C-type lectin domain; the sequence is FFNGSCYFFS…CDKLLFWICK (116 aa). N-linked (GlcNAc...) asparagine glycosylation is found at N114 and N129. Cystine bridges form between C134–C226 and C205–C218. Residues E196, N198, E203, N214, and D215 each coordinate Ca(2+).

The protein resides in the membrane. Probable pathogen-recognition receptor. May mediate the endocytosis of pathogens which are subsequently degraded in lysosomal compartments. May recognize in a calcium-dependent manner high mannose N-linked oligosaccharides in a variety of pathogen antigens. This is CD209 antigen-like protein D (Cd209d) from Mus musculus (Mouse).